Reading from the N-terminus, the 940-residue chain is Coatomer subunit beta (940 aa).

4 HEAT repeats span residues 11–48 (FLEAPSVDALKTSLESKNDYVKISAMKTILRVVINGDS), 90–125 (QEMILACNSFRNDLQHPNEFIRGATLRFLCKLKEPE), 126–162 (LLDPLIPTVRQCLEHRHAYVRKNAILAVFSIYQVSNH), and 310–347 (SILEDLITDVIPFLSSSDFDVCEKAISIIMGLVSSRNV).

As to quaternary structure, oligomeric complex that consists of at least the alpha, beta, beta', gamma, delta, epsilon and zeta subunits.

Its subcellular location is the cytoplasm. The protein localises to the golgi apparatus membrane. The protein resides in the cytoplasmic vesicle. It localises to the COPI-coated vesicle membrane. Its function is as follows. The coatomer is a cytosolic protein complex that binds to dilysine motifs and reversibly associates with Golgi non-clathrin-coated vesicles, which further mediate biosynthetic protein transport from the ER, via the Golgi up to the trans Golgi network. Coatomer complex is required for budding from Golgi membranes, and is essential for the retrograde Golgi-to-ER transport of dilysine-tagged proteins. This Schizosaccharomyces pombe (strain 972 / ATCC 24843) (Fission yeast) protein is Coatomer subunit beta (sec26).